Here is a 418-residue protein sequence, read N- to C-terminus: Isocitrate dehydrogenase [NADP] (418 aa).

Thr-106 provides a ligand contact to NADP(+). Ser-115, Asn-117, Arg-121, Arg-131, and Arg-155 together coordinate D-threo-isocitrate. Ser-115 carries the phosphoserine modification. At Thr-193 the chain carries Phosphothreonine. Residue Asp-309 participates in Mg(2+) binding. NADP(+) contacts are provided by residues 341 to 347 (HGTAPKY), Asn-354, Tyr-393, and Arg-397.

This sequence belongs to the isocitrate and isopropylmalate dehydrogenases family. In terms of assembly, homodimer. The cofactor is Mg(2+). Requires Mn(2+) as cofactor.

Its subcellular location is the secreted. It catalyses the reaction D-threo-isocitrate + NADP(+) = 2-oxoglutarate + CO2 + NADPH. Functionally, catalyzes the oxidative decarboxylation of isocitrate to 2-oxoglutarate and carbon dioxide with the concomitant reduction of NADP(+). The polypeptide is Isocitrate dehydrogenase [NADP] (icd) (Pseudomonas aeruginosa (strain UCBPP-PA14)).